Consider the following 248-residue polypeptide: Ubiquinone/menaquinone biosynthesis C-methyltransferase UbiE (248 aa).

Residues Ser-68 and Asp-92 each contribute to the S-adenosyl-L-methionine site.

Belongs to the class I-like SAM-binding methyltransferase superfamily. MenG/UbiE family.

The catalysed reaction is a 2-demethylmenaquinol + S-adenosyl-L-methionine = a menaquinol + S-adenosyl-L-homocysteine + H(+). The enzyme catalyses a 2-methoxy-6-(all-trans-polyprenyl)benzene-1,4-diol + S-adenosyl-L-methionine = a 5-methoxy-2-methyl-3-(all-trans-polyprenyl)benzene-1,4-diol + S-adenosyl-L-homocysteine + H(+). Its pathway is quinol/quinone metabolism; menaquinone biosynthesis; menaquinol from 1,4-dihydroxy-2-naphthoate: step 2/2. It functions in the pathway cofactor biosynthesis; ubiquinone biosynthesis. Functionally, methyltransferase required for the conversion of demethylmenaquinol (DMKH2) to menaquinol (MKH2) and the conversion of 2-polyprenyl-6-methoxy-1,4-benzoquinol (DDMQH2) to 2-polyprenyl-3-methyl-6-methoxy-1,4-benzoquinol (DMQH2). The sequence is that of Ubiquinone/menaquinone biosynthesis C-methyltransferase UbiE from Rickettsia rickettsii (strain Iowa).